Consider the following 464-residue polypeptide: Phosphoglucosamine mutase (464 aa).

Ser-112 acts as the Phosphoserine intermediate in catalysis. Residues Ser-112, Asp-252, Asp-254, and Asp-256 each contribute to the Mg(2+) site. Ser-112 carries the phosphoserine modification.

Belongs to the phosphohexose mutase family. Requires Mg(2+) as cofactor. In terms of processing, activated by phosphorylation.

The enzyme catalyses alpha-D-glucosamine 1-phosphate = D-glucosamine 6-phosphate. Catalyzes the conversion of glucosamine-6-phosphate to glucosamine-1-phosphate. This chain is Phosphoglucosamine mutase, found in Synechococcus sp. (strain CC9902).